The following is a 229-amino-acid chain: Geodin cluster transcription factor (229 aa).

Positions 12–39 (CHACAASKVRCSKEKPTCSRCSKRGTTC) form a DNA-binding region, zn(2)-C6 fungal-type. Disordered stretches follow at residues 50 to 100 (KQLN…PGTT) and 141 to 169 (TANSEPLDAEGGITSSHNTSSNSPARPPT). 2 stretches are compositionally biased toward polar residues: residues 51-71 (QLNNRSTAKESSNTTRTSLAT) and 153-164 (ITSSHNTSSNSP).

The protein resides in the nucleus. Functionally, transcription factor that regulates the expression of the gene cluster that mediates the biosynthesis of geodin, an intermediate in the biosynthesis of other natural products. This Aspergillus terreus (strain NIH 2624 / FGSC A1156) protein is Geodin cluster transcription factor.